The sequence spans 293 residues: Bifunctional protein FolD (293 aa).

NADP(+) is bound by residues 165-167, S190, and I231; that span reads GRS.

The protein belongs to the tetrahydrofolate dehydrogenase/cyclohydrolase family. In terms of assembly, homodimer.

It carries out the reaction (6R)-5,10-methylene-5,6,7,8-tetrahydrofolate + NADP(+) = (6R)-5,10-methenyltetrahydrofolate + NADPH. It catalyses the reaction (6R)-5,10-methenyltetrahydrofolate + H2O = (6R)-10-formyltetrahydrofolate + H(+). It participates in one-carbon metabolism; tetrahydrofolate interconversion. In terms of biological role, catalyzes the oxidation of 5,10-methylenetetrahydrofolate to 5,10-methenyltetrahydrofolate and then the hydrolysis of 5,10-methenyltetrahydrofolate to 10-formyltetrahydrofolate. The sequence is that of Bifunctional protein FolD from Synechococcus sp. (strain CC9902).